An 839-amino-acid chain; its full sequence is Protein translocase subunit SecA (839 aa).

ATP-binding positions include Q85, 103–107 (GEGKT), and D493. A compositionally biased stretch (basic and acidic residues) spans 780 to 790 (QIHEQERERAS). The disordered stretch occupies residues 780–839 (QIHEQERERASQRATTAAPQNIQSQQSANTDDLPKVERNEACPCGSGKKFKNCHGRKSFS). A compositionally biased stretch (polar residues) spans 791 to 809 (QRATTAAPQNIQSQQSANT). Residues C821, C823, C832, and H833 each coordinate Zn(2+). The span at 827–839 (KKFKNCHGRKSFS) shows a compositional bias: basic residues.

It belongs to the SecA family. Monomer and homodimer. Part of the essential Sec protein translocation apparatus which comprises SecA, SecYEG and auxiliary proteins SecDF. Other proteins may also be involved. It depends on Zn(2+) as a cofactor.

Its subcellular location is the cell membrane. It is found in the cytoplasm. It carries out the reaction ATP + H2O + cellular proteinSide 1 = ADP + phosphate + cellular proteinSide 2.. In terms of biological role, part of the Sec protein translocase complex. Interacts with the SecYEG preprotein conducting channel. Has a central role in coupling the hydrolysis of ATP to the transfer of proteins into and across the cell membrane, serving as an ATP-driven molecular motor driving the stepwise translocation of polypeptide chains across the membrane. The chain is Protein translocase subunit SecA from Streptococcus pyogenes serotype M1.